A 207-amino-acid chain; its full sequence is Small ribosomal subunit protein uS7y (207 aa).

Ala-2 is subject to N-acetylalanine.

Belongs to the universal ribosomal protein uS7 family. Expressed in root tips, lateral root primordia, leaf primordia, shoot apical meristem and vasculature of cotyledons.

The polypeptide is Small ribosomal subunit protein uS7y (Arabidopsis thaliana (Mouse-ear cress)).